Consider the following 295-residue polypeptide: Elongation factor Ts (295 aa).

An involved in Mg(2+) ion dislocation from EF-Tu region spans residues 79–82 (TDFV).

It belongs to the EF-Ts family.

It is found in the cytoplasm. In terms of biological role, associates with the EF-Tu.GDP complex and induces the exchange of GDP to GTP. It remains bound to the aminoacyl-tRNA.EF-Tu.GTP complex up to the GTP hydrolysis stage on the ribosome. The chain is Elongation factor Ts from Bacillus cereus (strain G9842).